An 83-amino-acid polypeptide reads, in one-letter code: Acylphosphatase (83 aa).

The Acylphosphatase-like domain occupies 1-83 (MIEGRVQRVG…TGDDWFEVRY (83 aa)). Residues Arg-12 and Asn-30 contribute to the active site.

The protein belongs to the acylphosphatase family.

It catalyses the reaction an acyl phosphate + H2O = a carboxylate + phosphate + H(+). The polypeptide is Acylphosphatase (acyP) (Synechococcus sp. (strain CC9605)).